The following is a 196-amino-acid chain: Crossover junction endodeoxyribonuclease RuvC (196 aa).

Catalysis depends on residues Asp-19, Glu-80, and Asp-153. The Mg(2+) site is built by Asp-19, Glu-80, and Asp-153.

The protein belongs to the RuvC family. In terms of assembly, homodimer which binds Holliday junction (HJ) DNA. The HJ becomes 2-fold symmetrical on binding to RuvC with unstacked arms; it has a different conformation from HJ DNA in complex with RuvA. In the full resolvosome a probable DNA-RuvA(4)-RuvB(12)-RuvC(2) complex forms which resolves the HJ. Mg(2+) serves as cofactor.

It is found in the cytoplasm. The enzyme catalyses Endonucleolytic cleavage at a junction such as a reciprocal single-stranded crossover between two homologous DNA duplexes (Holliday junction).. Its function is as follows. The RuvA-RuvB-RuvC complex processes Holliday junction (HJ) DNA during genetic recombination and DNA repair. Endonuclease that resolves HJ intermediates. Cleaves cruciform DNA by making single-stranded nicks across the HJ at symmetrical positions within the homologous arms, yielding a 5'-phosphate and a 3'-hydroxyl group; requires a central core of homology in the junction. The consensus cleavage sequence is 5'-(A/T)TT(C/G)-3'. Cleavage occurs on the 3'-side of the TT dinucleotide at the point of strand exchange. HJ branch migration catalyzed by RuvA-RuvB allows RuvC to scan DNA until it finds its consensus sequence, where it cleaves and resolves the cruciform DNA. This is Crossover junction endodeoxyribonuclease RuvC from Cutibacterium acnes (strain DSM 16379 / KPA171202) (Propionibacterium acnes).